Reading from the N-terminus, the 2101-residue chain is General transcription factor 3C polypeptide 1 (2101 aa).

Acidic residues predominate over residues 473–487 (GEEAFLSDSESEEES). Disordered stretches follow at residues 473-574 (GEEA…MDSH) and 588-609 (NPKEGGGSQKGGRHGSSQDKPH). Over residues 492 to 503 (GKRRGRGSRGHA) the composition is skewed to basic residues. The span at 504-513 (RASGDAGSGS) shows a compositional bias: low complexity. A Glycyl lysine isopeptide (Lys-Gly) (interchain with G-Cter in SUMO2) cross-link involves residue K534. The residue at position 667 (S667) is a Phosphoserine. Disordered stretches follow at residues 718 to 772 (STAN…EKMG) and 820 to 864 (GEQP…SSWE). Over residues 747–759 (RSANSDPNTSSKP) the composition is skewed to polar residues. 2 stretches are compositionally biased toward basic and acidic residues: residues 760-771 (ESTRVKKTDEKM) and 826-836 (HSERKTGKQES). Glycyl lysine isopeptide (Lys-Gly) (interchain with G-Cter in SUMO2) cross-links involve residues K770 and K833. A Phosphoserine modification is found at S1063. Residues 1186–1196 (EEQFELDREPT) are compositionally biased toward basic and acidic residues. Disordered stretches follow at residues 1186–1239 (EEQF…KKLR), 1598–1627 (KSLGKDGGLDDDEEEEDLDEGSGTKRQGVE), and 1822–1923 (DTKA…QENQ). T1196 is modified (phosphothreonine). Positions 1199–1215 (RNRKVRGGKSQKRKRLK) are enriched in basic residues. A compositionally biased stretch (basic and acidic residues) spans 1229 to 1239 (EHPEAKSKKLR). The segment covering 1606–1617 (LDDDEEEEDLDE) has biased composition (acidic residues). Basic and acidic residues predominate over residues 1822–1831 (DTKASGDDSQ). Phosphoserine occurs at positions 1854 and 1890. Residues 1900–1910 (EAQAPAQLAAP) are compositionally biased toward low complexity.

The protein belongs to the TFIIIC subunit 1 family. In terms of assembly, part of the TFIIIC subcomplex TFIIIC2, consisting of six subunits, GTF3C1, GTF3C2, GTF3C3, GTF3C4, GTF3C5 and GTF3C6. Interacts with IGHMBP2. Interacts with MAF1.

The protein resides in the nucleus. Its function is as follows. Required for RNA polymerase III-mediated transcription. Component of TFIIIC that initiates transcription complex assembly on tRNA and is required for transcription of 5S rRNA and other stable nuclear and cytoplasmic RNAs. Binds to the box B promoter element. The sequence is that of General transcription factor 3C polypeptide 1 (Gtf3c1) from Mus musculus (Mouse).